Reading from the N-terminus, the 552-residue chain is Nucleolar complex protein 4 (552 aa).

Belongs to the CBF/MAK21 family. As to quaternary structure, interacts with NOP14 and MPP10. Interacts with snoRNA U3. Component of the ribosomal small subunit (SSU) processome composed of at least 40 protein subunits and snoRNA U3.

It localises to the nucleus. It is found in the nucleolus. Functionally, involved in nucleolar processing of pre-18S ribosomal RNA and ribosome assembly. Has a role in the nuclear export of 40S pre-ribosomal subunit to the cytoplasm. Its subcellular location and association with pre-40S subunit are unaffected by RPS19 disruptions, suggesting it acts before the ribosomal protein. This is Nucleolar complex protein 4 (NOC4) from Saccharomyces cerevisiae (strain ATCC 204508 / S288c) (Baker's yeast).